The primary structure comprises 130 residues: MNGTYSYGTGRRKSAVARVFIKPGSGVITVNNKPVDEFFSRETGRMVVRQPLELTGNLDRFDILVNIHGGGESGQAGAVRHGITRALIDFDATLKPVLSNAGLVTRDAREVERKKVGLRKARRRKQFSKR.

It belongs to the universal ribosomal protein uS9 family.

The chain is Small ribosomal subunit protein uS9 from Nitrosospira multiformis (strain ATCC 25196 / NCIMB 11849 / C 71).